A 274-amino-acid polypeptide reads, in one-letter code: MAVIKMKPTSPGMRGMVKISRDHLHKGEPYAPLLEPQFQHSGRNNNGHITVRHKGGGHKHHYRVVDFKRNKDAIPAKVERIEYDPNRTAHIALICYADGERAYIIAPRGLEVGATILSGSEAPIRVGNTLPIRNIPVGSTIHCIEMQIGKGAQIARSAGTSATLLAREGTYAQVRMRSGEVRKIHIECRATIGEVANEEHSLRRLGKAGVKRWMGIRPTVRGVVMNPVDHPHGGGEGKTGEGRHPVDPWGNLTKGYRTRNNKRTQVMIVSRRKK.

A disordered region spans residues 224-256; that stretch reads VMNPVDHPHGGGEGKTGEGRHPVDPWGNLTKGY. Basic and acidic residues predominate over residues 229–246; the sequence is DHPHGGGEGKTGEGRHPV.

This sequence belongs to the universal ribosomal protein uL2 family. In terms of assembly, part of the 50S ribosomal subunit. Forms a bridge to the 30S subunit in the 70S ribosome.

Its function is as follows. One of the primary rRNA binding proteins. Required for association of the 30S and 50S subunits to form the 70S ribosome, for tRNA binding and peptide bond formation. It has been suggested to have peptidyltransferase activity; this is somewhat controversial. Makes several contacts with the 16S rRNA in the 70S ribosome. This Polaromonas naphthalenivorans (strain CJ2) protein is Large ribosomal subunit protein uL2.